Here is a 181-residue protein sequence, read N- to C-terminus: uncharacterized protein (181 aa).

The 159-residue stretch at 1–159 (MTVHHFTFHI…KACWMMQSLT (159 aa)) folds into the N-acetyltransferase domain.

It belongs to the acetyltransferase family.

This is an uncharacterized protein from Escherichia coli (strain K12).